The following is a 314-amino-acid chain: Caspase-like protein (314 aa).

Belongs to the peptidase C14A family.

Functionally, may be involved in viral replication. The protein is Caspase-like protein of Heliothis virescens ascovirus 3e (HvAV-3e).